A 461-amino-acid polypeptide reads, in one-letter code: Phosphomethylpyrimidine synthase (461 aa).

Substrate is bound by residues Asn-80, Met-109, Tyr-139, His-175, Ser-195–Gly-197, Asp-236–Arg-239, and Glu-275. Position 279 (His-279) interacts with Zn(2+). Tyr-302 lines the substrate pocket. Zn(2+) is bound at residue His-343. [4Fe-4S] cluster is bound by residues Cys-423, Cys-426, and Cys-431.

The protein belongs to the ThiC family. Requires [4Fe-4S] cluster as cofactor.

It carries out the reaction 5-amino-1-(5-phospho-beta-D-ribosyl)imidazole + S-adenosyl-L-methionine = 4-amino-2-methyl-5-(phosphooxymethyl)pyrimidine + CO + 5'-deoxyadenosine + formate + L-methionine + 3 H(+). It functions in the pathway cofactor biosynthesis; thiamine diphosphate biosynthesis. Catalyzes the synthesis of the hydroxymethylpyrimidine phosphate (HMP-P) moiety of thiamine from aminoimidazole ribotide (AIR) in a radical S-adenosyl-L-methionine (SAM)-dependent reaction. The chain is Phosphomethylpyrimidine synthase from Picosynechococcus sp. (strain ATCC 27264 / PCC 7002 / PR-6) (Agmenellum quadruplicatum).